We begin with the raw amino-acid sequence, 935 residues long: Formin-I (935 aa).

Residues 35–76 (QQQQQQQQQQINNENENSINNQENKENNNKDNNNNNNKEIKQ) are a coiled coil. Disordered stretches follow at residues 52–78 (SINNQENKENNNKDNNNNNNKEIKQSS), 380–511 (LSSA…QLTP), and 561–590 (KEKMSKENLNNSNNNNNNNSNNNGEEQSLS). Residues 384 to 407 (KKQPQQQPQKDVTSSSSSSSNSSS) are compositionally biased toward low complexity. Residues 418 to 428 (ITTNDSSSSNP) are compositionally biased toward polar residues. Over residues 431-443 (DFDKLSLSSDDKV) the composition is skewed to basic and acidic residues. Residues 444–454 (NNNNVQIENTT) show a composition bias toward polar residues. The FH1 domain maps to 444-505 (NNNNVQIENT…KPNNSGGGGG (62 aa)). Pro residues predominate over residues 456 to 482 (SVPPPPPVGAPPPPPPPPPPPPPPPPS). A compositionally biased stretch (polar residues) spans 484 to 499 (LKLNRNRISTPKKPNN). The 430-residue stretch at 506–935 (GGQLTPLQKK…SLNLSTLNSK (430 aa)) folds into the FH2 domain. Residues 568–583 (NLNNSNNNNNNNSNNN) are compositionally biased toward low complexity. 2 coiled-coil regions span residues 702–730 (SLLDSIEINNNQLSKAIEQLRNSRKFIKV) and 803–834 (QSSLENILEESNEIENKFKQVDQEIQYHQQLL).

It belongs to the formin homology family. Diaphanous subfamily.

Functionally, formins play an important role in the nucleation of actin and the formation of linear actin filaments. The protein is Formin-I (forI) of Dictyostelium discoideum (Social amoeba).